Here is a 163-residue protein sequence, read N- to C-terminus: Phosphopantetheine adenylyltransferase (163 aa).

Ser-9 is a substrate binding site. ATP-binding positions include 9–10 (SF) and His-17. The substrate site is built by Lys-41, Ile-75, and Arg-89. ATP contacts are provided by residues 90 to 92 (GIR), Glu-100, and 125 to 131 (HLYVRSD).

It belongs to the bacterial CoaD family. In terms of assembly, homohexamer. It depends on Mg(2+) as a cofactor.

The protein localises to the cytoplasm. The enzyme catalyses (R)-4'-phosphopantetheine + ATP + H(+) = 3'-dephospho-CoA + diphosphate. Its pathway is cofactor biosynthesis; coenzyme A biosynthesis; CoA from (R)-pantothenate: step 4/5. Its function is as follows. Reversibly transfers an adenylyl group from ATP to 4'-phosphopantetheine, yielding dephospho-CoA (dPCoA) and pyrophosphate. The protein is Phosphopantetheine adenylyltransferase of Borreliella burgdorferi (strain ZS7) (Borrelia burgdorferi).